The sequence spans 55 residues: Large ribosomal subunit protein bL33 (55 aa).

Belongs to the bacterial ribosomal protein bL33 family. Part of the 50S ribosomal subunit. Contacts protein L35.

In terms of biological role, binds the 23S rRNA and the E site tRNA. This Deinococcus radiodurans (strain ATCC 13939 / DSM 20539 / JCM 16871 / CCUG 27074 / LMG 4051 / NBRC 15346 / NCIMB 9279 / VKM B-1422 / R1) protein is Large ribosomal subunit protein bL33 (rpmG).